Here is a 354-residue protein sequence, read N- to C-terminus: Alkanal monooxygenase alpha chain (354 aa).

It belongs to the bacterial luciferase oxidoreductase family. In terms of assembly, heterodimer of an alpha and a beta chain.

It catalyses the reaction a long-chain fatty aldehyde + FMNH2 + O2 = a long-chain fatty acid + hnu + FMN + H2O + 2 H(+). Light-emitting reaction in luminous bacteria. The polypeptide is Alkanal monooxygenase alpha chain (luxA) (Aliivibrio fischeri (Vibrio fischeri)).